Here is a 179-residue protein sequence, read N- to C-terminus: Large ribosomal subunit protein uL5 (179 aa).

The protein belongs to the universal ribosomal protein uL5 family. Part of the 50S ribosomal subunit; part of the 5S rRNA/L5/L18/L25 subcomplex. Contacts the 5S rRNA and the P site tRNA. Forms a bridge to the 30S subunit in the 70S ribosome.

In terms of biological role, this is one of the proteins that bind and probably mediate the attachment of the 5S RNA into the large ribosomal subunit, where it forms part of the central protuberance. In the 70S ribosome it contacts protein S13 of the 30S subunit (bridge B1b), connecting the 2 subunits; this bridge is implicated in subunit movement. Contacts the P site tRNA; the 5S rRNA and some of its associated proteins might help stabilize positioning of ribosome-bound tRNAs. The chain is Large ribosomal subunit protein uL5 from Nitratidesulfovibrio vulgaris (strain DSM 19637 / Miyazaki F) (Desulfovibrio vulgaris).